The sequence spans 192 residues: Cytidylate kinase (192 aa).

Residue 7 to 15 (GPAGSGKST) participates in ATP binding.

This sequence belongs to the cytidylate kinase family. Type 2 subfamily.

Its subcellular location is the cytoplasm. The enzyme catalyses CMP + ATP = CDP + ADP. It carries out the reaction dCMP + ATP = dCDP + ADP. This Haloarcula marismortui (strain ATCC 43049 / DSM 3752 / JCM 8966 / VKM B-1809) (Halobacterium marismortui) protein is Cytidylate kinase.